Reading from the N-terminus, the 107-residue chain is L-amino-acid oxidase (107 aa).

Gly35–Arg38 provides a ligand contact to FAD. Substrate is bound by residues Arg38 and His49.

This sequence belongs to the flavin monoamine oxidase family. FIG1 subfamily. As to quaternary structure, homodimer; non-covalently linked. It depends on FAD as a cofactor. N-glycosylated. Expressed by the venom gland.

The protein resides in the secreted. The catalysed reaction is an L-alpha-amino acid + O2 + H2O = a 2-oxocarboxylate + H2O2 + NH4(+). The enzyme catalyses L-leucine + O2 + H2O = 4-methyl-2-oxopentanoate + H2O2 + NH4(+). It catalyses the reaction L-phenylalanine + O2 + H2O = 3-phenylpyruvate + H2O2 + NH4(+). It carries out the reaction L-tryptophan + O2 + H2O = indole-3-pyruvate + H2O2 + NH4(+). The catalysed reaction is L-methionine + O2 + H2O = 4-methylsulfanyl-2-oxobutanoate + H2O2 + NH4(+). The enzyme catalyses L-isoleucine + O2 + H2O = (S)-3-methyl-2-oxopentanoate + H2O2 + NH4(+). It catalyses the reaction L-arginine + O2 + H2O = 5-guanidino-2-oxopentanoate + H2O2 + NH4(+). It carries out the reaction L-histidine + O2 + H2O = 3-(imidazol-5-yl)pyruvate + H2O2 + NH4(+). Its function is as follows. Catalyzes an oxidative deamination of predominantly hydrophobic and aromatic L-amino acids, thus producing hydrogen peroxide that may contribute to the diverse toxic effects of this enzyme. Shows high activity on L-Met, moderate activity on L-Trp, L-Leu, L-His, L-Phe, L-Arg, L-Ile, low activity on L-Val, L-Glu, L-Lys, L-Gln, L-Asn, L-Tyr, L-Ala, and no activity on L-Asp, L-Ser, L-Pro, L-Gly, L-Thr and L-Cys. Shows antimicrobial activity inhibiting the growth of both Gram-negative and Gram-positive bacteria. Also inhibits platelet aggregation induced by ADP or collagen. Effects of snake L-amino oxidases on platelets are controversial, since they either induce aggregation or inhibit agonist-induced aggregation. These different effects are probably due to different experimental conditions. This protein may also induce hemorrhage, hemolysis, edema, apoptosis, and have antiparasitic activities. The chain is L-amino-acid oxidase from Macrovipera lebetinus (Levantine viper).